A 134-amino-acid chain; its full sequence is Putative integral membrane protein YxzK (134 aa).

The next 4 helical transmembrane spans lie at 3–23 (VIRIILQVLILYVFFMIGEAI), 35–55 (IVGLVLLLICLGLRIVPVSII), 58–78 (GAGFLLSFLPLLFIPAMTGVI), and 89–109 (LMLLITVVLSTIVTIIAAGFA).

It is found in the cell membrane. The chain is Putative integral membrane protein YxzK (yxzK) from Bacillus subtilis (strain 168).